The following is a 684-amino-acid chain: Endo-1,4-beta-xylanase A (684 aa).

An N-terminal signal peptide occupies residues 1–34 (MMRSLKSRKLVFILAMLFLINAIVSLKFITYSSA). CBM-cenC domains follow at residues 40–190 (KSKY…IKDL) and 193–342 (AYVL…ISDE). One can recognise a GH10 domain in the interval 350-678 (DYNLPSLCEK…KFAFWSLIDP (329 aa)). Glu-490 acts as the Proton donor in catalysis. Glu-598 acts as the Nucleophile in catalysis.

This sequence belongs to the glycosyl hydrolase 10 (cellulase F) family.

It carries out the reaction Endohydrolysis of (1-&gt;4)-beta-D-xylosidic linkages in xylans.. It participates in glycan degradation; xylan degradation. The protein is Endo-1,4-beta-xylanase A (xynA) of Caldicellulosiruptor sp. (strain Rt8B.4).